A 444-amino-acid polypeptide reads, in one-letter code: ATP-dependent protease ATPase subunit HslU (444 aa).

ATP is bound by residues isoleucine 18, 60-65 (GVGKTE), aspartate 256, glutamate 322, and arginine 394.

It belongs to the ClpX chaperone family. HslU subfamily. A double ring-shaped homohexamer of HslV is capped on each side by a ring-shaped HslU homohexamer. The assembly of the HslU/HslV complex is dependent on binding of ATP.

It is found in the cytoplasm. ATPase subunit of a proteasome-like degradation complex; this subunit has chaperone activity. The binding of ATP and its subsequent hydrolysis by HslU are essential for unfolding of protein substrates subsequently hydrolyzed by HslV. HslU recognizes the N-terminal part of its protein substrates and unfolds these before they are guided to HslV for hydrolysis. This Klebsiella pneumoniae (strain 342) protein is ATP-dependent protease ATPase subunit HslU.